The following is an 879-amino-acid chain: MMFYRLLSIVGRQRASPGWQNWSSARNSTSAAEARSMALPTQAQVVICGGGITGTSVAYHLSKMGWKDIVLLEQGRLAAGSTRFCAGILSTARHLTIEQKMADYSNKLYYQLEQETGIQTGYTRTGSIFLAQTQDRLISLKRINAGLNVIGIPSEIISPKKVAELHHLLNVHDLVGAMHVPEDAVVSSADVALALASAASQNGVQIYDRTSVLHVMVKKGQVTGVETDKGQIECQYFVNCAGQWAYELGLSNEEPVSIPLHACEHFYLLTRPLETPLQSSTPTIVDADGRIYIRNWQGGILSGGFEKNPKPIFTEGKNQLEIQNLQEDWDHFEPLLSSLLRRMPELETLEIMKLVNCPETFTPDMRCIMGESPAVQGYFVLAGMNSAGLSFGGGAGKYLAEWMVHGYPSENVWELDLKRFGALQSSRTFLRHRVMEVMPLMYDLKVPRWDFQTGRQLRTSPLYDRLDAQGARWMEKHGFERPKYFVPPDKDLLALEQSKTFYKPDWFDIVESEVKCCKEAVCVIDMSSFTKFEITSTGDQALEVLQYLFSNDLDVPVGHIVHTGMLNEGGGYENDCSIARLNKRSFFMISPTDQQVHCWAWLKKHMPKDSNLLLEDVTWKYTALNLIGPRAVDVLSELSYAPMTPDHFPSLFCKEMSVGYANGIRVMSMTHTGEPGFMLYIPIEYALHVYNEVMSVGQKYGIRNAGYYALRSLRIEKFFAFWGQDINNLTTPLECGRESRVKLEKGMDFIGRDALLQQKQNGVYKRLTMFILDDHDSDLDLWPWWGEPIYRNGQYVGKTTSSAYSYSLERHVCLGFVHNFSEDTGEEQVVTADFINRGEYEIDIAGYRFQAKAKLYPVASLFTQKRRKDDMELSDLHGK.

The N-terminal 27 residues, 1–27 (MMFYRLLSIVGRQRASPGWQNWSSARN), are a transit peptide targeting the mitochondrion.

Belongs to the GcvT family. As to quaternary structure, heterodimer of a catalytic (PDP1) and a regulatory (PDPR) subunit.

Its subcellular location is the mitochondrion matrix. Its function is as follows. Decreases the sensitivity of PDP1 to magnesium ions, and this inhibition is reversed by the polyamine spermine. The chain is Pyruvate dehydrogenase phosphatase regulatory subunit, mitochondrial (PDPR) from Homo sapiens (Human).